The chain runs to 119 residues: Transcription and mRNA export factor SUS1 (119 aa).

This sequence belongs to the ENY2 family. Component of the nuclear pore complex (NPC)-associated TREX-2 complex (transcription and export complex 2), composed of at least SUS1, SAC3, THP1, SEM1, and CDC31. TREX-2 contains 2 SUS1 chains. The TREX-2 complex interacts with the nucleoporin NUP1. Component of the 1.8 MDa SAGA transcription coactivator-HAT complex. SAGA is built of 5 distinct domains with specialized functions. Within the SAGA complex, SUS1, SGF11, SGF73 and UBP8 form an additional subcomplex of SAGA called the DUB module (deubiquitination module). Interacts directly with THP1, SAC3, SGF11, and with the RNA polymerase II.

The protein localises to the nucleus. The protein resides in the nucleoplasm. It is found in the cytoplasm. Its subcellular location is the P-body. Functionally, involved in mRNA export coupled transcription activation by association with both the TREX-2 and the SAGA complexes. At the promoters, SAGA is required for recruitment of the basal transcription machinery. It influences RNA polymerase II transcriptional activity through different activities such as TBP interaction and promoter selectivity, interaction with transcription activators, and chromatin modification through histone acetylation and deubiquitination. Within the SAGA complex, participates in a subcomplex required for deubiquitination of H2B and for the maintenance of steady-state H3 methylation levels. The TREX-2 complex functions in docking export-competent ribonucleoprotein particles (mRNPs) to the nuclear entrance of the nuclear pore complex (nuclear basket). TREX-2 participates in mRNA export and accurate chromatin positioning in the nucleus by tethering genes to the nuclear periphery. May also be involved in cytoplasmic mRNA decay by interaction with components of P-bodies. This chain is Transcription and mRNA export factor SUS1, found in Candida albicans (strain SC5314 / ATCC MYA-2876) (Yeast).